The sequence spans 207 residues: Large ribosomal subunit protein uL4 (207 aa).

Residues 54-74 (RSDVRGGGKKPYRQKGTGNAR) form a disordered region.

This sequence belongs to the universal ribosomal protein uL4 family. As to quaternary structure, part of the 50S ribosomal subunit.

Functionally, one of the primary rRNA binding proteins, this protein initially binds near the 5'-end of the 23S rRNA. It is important during the early stages of 50S assembly. It makes multiple contacts with different domains of the 23S rRNA in the assembled 50S subunit and ribosome. Its function is as follows. Forms part of the polypeptide exit tunnel. This is Large ribosomal subunit protein uL4 from Magnetococcus marinus (strain ATCC BAA-1437 / JCM 17883 / MC-1).